Here is a 509-residue protein sequence, read N- to C-terminus: Erythropoietin receptor (509 aa).

The signal sequence occupies residues 1–24 (MYHFGATLWPGVGSLCLLLAGATW). Residues 25 to 251 (APSPNSPDAK…SLLTASDLDP (227 aa)) lie on the Extracellular side of the membrane. Intrachain disulfides connect cysteine 52-cysteine 62 and cysteine 91-cysteine 107. The Fibronectin type-III domain maps to 148-248 (PPAGLLARRA…EPASLLTASD (101 aa)). The N-linked (GlcNAc...) asparagine glycan is linked to asparagine 184. The WSXWS motif motif lies at 234–238 (WSAWS). The chain crosses the membrane as a helical span at residues 252–274 (LILTLSLILVLILLLLAVLALLS). The Cytoplasmic portion of the chain corresponds to 275–509 (HRRTLKQKIW…PSPPNYVTCS (235 aa)). A Glycyl lysine isopeptide (Lys-Gly) (interchain with G-Cter in ubiquitin) cross-link involves residue lysine 282. Positions 283–291 (IWPGIPSPE) match the Box 1 motif motif. Phosphotyrosine; by JAK2 is present on residues tyrosine 369 and tyrosine 427. The ITIM motif signature appears at 453 to 458 (LKYLYL). Lysine 454 participates in a covalent cross-link: Glycyl lysine isopeptide (Lys-Gly) (interchain with G-Cter in ubiquitin). Phosphotyrosine; by JAK2 occurs at positions 455, 457, 469, 486, 490, and 505. Residues 467–509 (TDYSSGGSQETQGGSSSGPYSNPYENSLVPAPEPSPPNYVTCS) form a disordered region. A compositionally biased stretch (low complexity) spans 470 to 493 (SSGGSQETQGGSSSGPYSNPYENS).

Belongs to the type I cytokine receptor family. Type 1 subfamily. As to quaternary structure, forms homodimers on EPO stimulation. The tyrosine-phosphorylated form interacts with several SH2 domain-containing proteins including LYN, the adapter protein SH2B2, PTPN6, PTPN11, JAK2, PI3 kinases, STAT5A/B, SOCS3, CRKL. Interacts with INPP5D/SHIP1. SH2B2 binding inhibits the JAK-STAT signaling. Interacts with RHEX; this interaction occurs in a erythropoietin (EPO)-dependent manner. Interacts with ATXN2L. In terms of processing, on EPO stimulation, phosphorylated on C-terminal tyrosine residues by JAK2. The phosphotyrosine motifs are also recruitment sites for several SH2-containing proteins and adapter proteins which mediate cell proliferation. Phosphorylation on Tyr-455 is required for PTPN6 interaction, Tyr-427 for PTPN11. Tyr-427 is also required for SOCS3 binding, but Tyr-455/Tyr-457 motif is the preferred binding site. Ubiquitinated by the ECS(SOCS2) complex following ligand-binding and phosphorylation by JAK2, leading to its degradation by the proteasome. Regulation by the ECS(SOCS2) complex acts as a negative feedback loop of erythropoietin-mediated signaling pathway. Ubiquitination at Lys-282 mediates receptor internalization, whereas ubiquitination at Lys-454 promotes trafficking of activated receptors to the lysosomes for degradation. Ubiquitinated by NOSIP; appears to be either multi-monoubiquitinated or polyubiquitinated. Ubiquitination mediates proliferation and survival of EPO-dependent cells.

The protein localises to the cell membrane. In terms of biological role, receptor for erythropoietin, which mediates erythropoietin-induced erythroblast proliferation and differentiation. Upon EPO stimulation, EPOR dimerizes triggering the JAK2/STAT5 signaling cascade. In some cell types, can also activate STAT1 and STAT3. May also activate the LYN tyrosine kinase. Isoform EPOR-T acts as a dominant-negative receptor of EPOR-mediated signaling. This Sus scrofa (Pig) protein is Erythropoietin receptor (EPOR).